A 64-amino-acid polypeptide reads, in one-letter code: DNA-binding protein 7b (64 aa).

It belongs to the 7 kDa DNA-binding/endoribonuclease P2 family. Monomer.

It is found in the cytoplasm. Can constrain negative DNA supercoils. May be involved in maintaining the integrity of the genome at high temperature. The protein is DNA-binding protein 7b of Saccharolobus islandicus (strain HVE10/4) (Sulfolobus islandicus).